We begin with the raw amino-acid sequence, 119 residues long: NADH-quinone oxidoreductase subunit A (119 aa).

The next 3 helical transmembrane spans lie at 7 to 27 (FPVL…VSIG), 63 to 83 (LVAI…PWGV), and 88 to 108 (IGWP…LGFA).

The protein belongs to the complex I subunit 3 family. NDH-1 is composed of 14 different subunits. Subunits NuoA, H, J, K, L, M, N constitute the membrane sector of the complex.

Its subcellular location is the cell inner membrane. It carries out the reaction a quinone + NADH + 5 H(+)(in) = a quinol + NAD(+) + 4 H(+)(out). NDH-1 shuttles electrons from NADH, via FMN and iron-sulfur (Fe-S) centers, to quinones in the respiratory chain. The immediate electron acceptor for the enzyme in this species is believed to be ubiquinone. Couples the redox reaction to proton translocation (for every two electrons transferred, four hydrogen ions are translocated across the cytoplasmic membrane), and thus conserves the redox energy in a proton gradient. The protein is NADH-quinone oxidoreductase subunit A of Paraburkholderia phytofirmans (strain DSM 17436 / LMG 22146 / PsJN) (Burkholderia phytofirmans).